The following is a 754-amino-acid chain: Circadian input-output histidine kinase CikA (754 aa).

An N-terminal domain, not required to complement the deletion strain region spans residues 1–183; that stretch reads MLAPSSNCSL…QVSAQIRLSL (183 aa). The segment at 184–338 is GAF domain, required to complement the deletion strain; the sequence is DLSEILTTTI…RDILQHLAEH (155 aa). Residues 390–611 enclose the Histidine kinase domain; sequence TMSHELRTPL…TFTVWIPEQT (222 aa). His-393 is subject to Phosphohistidine; by autocatalysis. Positions 606 to 754 are psR domain, required to complement the deletion strain and for cell pole localization, attenuates autophosphorylation activity. Binds KaiB(fs); it reads WIPEQTLIEP…NLSEGDRPSS (149 aa). The Response regulatory domain occupies 629–742; the sequence is HILLLEEEDE…LLLTTLQGLC (114 aa).

In the N-terminal section; belongs to the phytochrome family. In terms of assembly, homodimer. Part of the circadian clock (KaiA, KaiB, KaiC, CikA, RpaA, SasA), the composition of which varies during the circadian cycle. Interacts with LdpA. KaiA and CikA compete for binding to KaiB(fs).

The protein resides in the cytoplasm. It is found in the membrane. It carries out the reaction ATP + protein L-histidine = ADP + protein N-phospho-L-histidine.. Functionally, functions in an input pathway to the Kai circadian clock. Senses oxidized quinones via its C-terminal pseudo-receiver domain, providing a link between cell metabolism and the clock. Affects the ratio of phosphorylated to unphosphorylated KaiC, binds quinones via its pseudo-receptor domain. Quinone-binding destabilizes the protein rapidly. Autophosphorylates, does not transfer the phosphate to its pseudo-receiver (PsR) domain. May play a role in cell division, as suggested by its polar location and increased cell length in a deletion strain. In terms of biological role, member of the two-component regulatory system CikA/RpaA output pathway from the circadian clock, negatively regulating kaiBC expression independently of labA and of sasA. One of three clock output pathways. Dephosphorylates phospho-RpaA, enhanced by KaiB and KaiC, has only modest kinase activity on RpaA. A very robust clock is reconstituted with KaiA, KaiB, KaiC, SasA, CikA and RpaA; output is measured by transcription from an appropriate reporter. The polypeptide is Circadian input-output histidine kinase CikA (Synechococcus elongatus (strain ATCC 33912 / PCC 7942 / FACHB-805) (Anacystis nidulans R2)).